An 868-amino-acid polypeptide reads, in one-letter code: Translation initiation factor IF-2 (868 aa).

The span at 199 to 209 (SKKEEVKPEKV) shows a compositional bias: basic and acidic residues. The interval 199–269 (SKKEEVKPEK…GTEKSDKYRE (71 aa)) is disordered. The span at 249–260 (RGGRSKFKKKKG) shows a compositional bias: basic residues. A tr-type G domain is found at 368-537 (GRAPVVTIMG…LLQSEVLELK (170 aa)). The interval 377-384 (GHVDHGKT) is G1. 377–384 (GHVDHGKT) contacts GTP. The tract at residues 402–406 (GITQH) is G2. The segment at 423-426 (DTPG) is G3. GTP contacts are provided by residues 423–427 (DTPGH) and 477–480 (NKMD). A G4 region spans residues 477-480 (NKMD). The segment at 513-515 (SAK) is G5.

It belongs to the TRAFAC class translation factor GTPase superfamily. Classic translation factor GTPase family. IF-2 subfamily.

Its subcellular location is the cytoplasm. Functionally, one of the essential components for the initiation of protein synthesis. Protects formylmethionyl-tRNA from spontaneous hydrolysis and promotes its binding to the 30S ribosomal subunits. Also involved in the hydrolysis of GTP during the formation of the 70S ribosomal complex. The sequence is that of Translation initiation factor IF-2 from Legionella pneumophila (strain Paris).